Consider the following 605-residue polypeptide: Probable potassium transport system protein Kup 2 (605 aa).

Transmembrane regions (helical) follow at residues 17-37, 45-65, 96-116, 139-159, 169-189, 211-231, 246-266, 286-306, 338-358, 367-387, 394-414, and 417-437; these read GLVF…IMTL, VLGI…VEYA, MAFA…DGVI, AQGG…IFQF, FGPI…VSII, GLAG…GEAL, AWYF…AFIL, LYIP…QALI, IYIG…MILF, AYGL…TMIF, WKVP…TANL, and LPHG…IMVI.

Belongs to the HAK/KUP transporter (TC 2.A.72) family.

The protein localises to the cell inner membrane. It catalyses the reaction K(+)(in) + H(+)(in) = K(+)(out) + H(+)(out). Its function is as follows. Transport of potassium into the cell. Likely operates as a K(+):H(+) symporter. This Geobacter sulfurreducens (strain ATCC 51573 / DSM 12127 / PCA) protein is Probable potassium transport system protein Kup 2.